The chain runs to 154 residues: uncharacterized protein (154 aa).

Cysteine 4, cysteine 7, cysteine 16, cysteine 19, cysteine 24, cysteine 28, histidine 32, and cysteine 36 together coordinate Zn(2+). An HIT-type zinc finger spans residues 4–36 (CSICNESEIKYKCPKCSFPYCSLPCWKIHQSQC).

This is an uncharacterized protein from Schizosaccharomyces pombe (strain 972 / ATCC 24843) (Fission yeast).